Here is a 1436-residue protein sequence, read N- to C-terminus: MLNDILSRVARVGAMHAGNRPNPPADRPQPCQGKPPTSPGKTIKHKSFLGALAGAVAGALVAAAVAAAAVFLVGVTGGLAVAAVGALAVFAAGDLISAVTNKVSAVVDSASPAFGPVASGSGNVFVEKQPVARATKDTVACTKHNSPQLIAQGSESVFVNDAPAARIDDKTVCGATLKEGASTVFFGSGQGTYLEIADEFSWWEKALLIAVEFLVPPSRGMLKGLGKLFTRNGLKSVLKGAKAGALFITKVPGKMGCAARAFKANKGMARFKEAAKAFKKDPVYLASGEVIESRTDIELGQTLPLVFERTYRSASAHTGLLGRGWHDSWSEVATVTHDGLNTHVVITLAQGYDIDFTFHQDVQAVYCPHYPEFTLHRRGDGFSLWHRDQQTWRDFSVVQGERRLLSAIHDSHDNRIELVRDPKGYLRQLRHSDGVTLLLVWQGEYLHQIQRIDGGQKTLLAEYRQDEQGRLVEANATHAYHLYYEYNTAHRLTRWHDNDQTWARYEYDAQGRCVYTTCADGFLTARFDYLPDRVVMTDGLGQRSEFGFNDLHLMSWEQSPLGHITRYEYDEVGNLLREISPAGRVVEFTYLDDTGRVSTFTDGSGHQWQYDYDDAQRLCGVTDPLGREWGWVYDAEGNPERLTGPDASEVRFTWNRYGLLTQVSDAAGEVQARLQYDHRQRLLSATDAESRTRQLRYDRQDRVVQWQRADGARFRLGYRRASWTLPEQLIRPDDKEEQRQYDRHNNLLSYVDGNGALWRQTFGPFDLLTARTDAEGRTWRYEYDRESQQLIAVTAPDGSRWQWWLDADGRVIRERDMTGTETHYGYDEDGLCIRVRNGEGDTRHFLYDARGLLLRETAPDDTLHYRYDAAGRLTEVSSATAHVQLDYDLRDRVVREWHNGTLLTRQYDDAARTVTRTLTWDGDADDTTGTLAPLTSLFHYTRTGELRQVQLPDGADLTLTHDAAGRESLRTGGSGFVQQREYDVMGWLTREQSGAQHDGRLQPAQTREYRYDGAGNLTGVRHNRDAEGYRLDATGRVQEMLSGGAGKPVDTTARFHYTRTGLPQEAGRLTEWQAGRLVQHDDTHYQYDRAGRLIRKQVVQPGYRPQVWQYRWDSRNQLRVVDTPNGERWLYRYDPFGRRVGKRCDQKAEETRYLWDGDQIAEIRHYRHGQLIQRRHWVYNGWELVVQQRQHTGGDWETDFVTSSQNGTPQALFTPDGTLRWQVPKATLWGQRQTEKSESPDPGLAFAGQLRDSESGLCYNRFRYYDPAGGCYVSPDPIGIAGGESNYGYVQNPNTRVDPLGLAGCAMGEILADADKWSLAKIGDRQKGMIKDKLSTVKERSKALNTKMREHFNANEQKIISEWEKQTGMNWPTLSSGSRATPHHVIPIKNGGSNEWWNIIPVQHPHTGTIHGTGSALRTHLPYQKDGGKLWNLLGY.

Residues 16–42 are disordered; sequence HAGNRPNPPADRPQPCQGKPPTSPGKT. The next 2 helical transmembrane spans lie at 48-68 and 70-90; these read FLGA…VAAA and VFLV…LAVF. YD repeat units follow at residues 486 to 521, 569 to 605, 612 to 647, 766 to 799, and 847 to 879; these read YNTA…CADG, YDEV…DGSG, YDDA…GPDA, DLLT…PDGS, and YDAR…VSSA.

This sequence belongs to the RHS/WapA nuclease family.

The protein resides in the membrane. Toxic component of a toxin-immunity protein module, which functions as a cellular contact-dependent growth inhibition (CDI) system. This protein may be a nuclease that is specifically inhibited by its cognate immunity protein RhsBI. Upon expression of the C-terminus (residues 1284-1436) in E.coli growth is inhibited, cells elongate, nucleoids condense and plasmid DNA is degraded; these effects are blocked specifically by cognate immunity protein RshIB. Cell contact is necessary for growth inhibition. The protein is Probable deoxyribonuclease RhsB (rhsB) of Dickeya dadantii (strain 3937) (Erwinia chrysanthemi (strain 3937)).